We begin with the raw amino-acid sequence, 507 residues long: 25-hydroxyvitamin D-1 alpha hydroxylase, mitochondrial (507 aa).

Cys-454 serves as a coordination point for heme.

Belongs to the cytochrome P450 family. Heme is required as a cofactor. Kidney.

The protein localises to the mitochondrion membrane. The catalysed reaction is calcidiol + 2 reduced [adrenodoxin] + O2 + 2 H(+) = calcitriol + 2 oxidized [adrenodoxin] + H2O. The enzyme catalyses secalciferol + 2 reduced [adrenodoxin] + O2 + 2 H(+) = calcitetrol + 2 oxidized [adrenodoxin] + H2O. It carries out the reaction 25-hydroxy-24-oxocalciol + 2 reduced [adrenodoxin] + O2 + 2 H(+) = (1S)-1,25-dihydroxy-24-oxocalciol + 2 oxidized [adrenodoxin] + H2O. It catalyses the reaction 25-hydroxyvitamin D2 + 2 reduced [adrenodoxin] + O2 + 2 H(+) = 1alpha,25-dihydroxyvitamin D2 + 2 oxidized [adrenodoxin] + H2O. The protein operates within hormone biosynthesis; vitamin D biosynthesis. With respect to regulation, activated by cardiolipin and dioleoyl phosphatidylethanolamine (DOPE), phospholipids found in the inner mitochondrial membrane. Inhibited by high substrate concentration. In terms of biological role, a cytochrome P450 monooxygenase involved in vitamin D metabolism and in calcium and phosphorus homeostasis. Catalyzes the rate-limiting step in the activation of vitamin D in the kidney, namely the hydroxylation of 25-hydroxyvitamin D3/calcidiol at the C1-alpha position to form the hormonally active form of vitamin D3, 1alpha,25-dihydroxyvitamin D3/calcitriol that acts via the vitamin D receptor (VDR). Has 1-alpha-hydroxylase activity on vitamin D intermediates of the CYP24A1-mediated inactivation pathway. Converts 24R,25-dihydroxyvitamin D3/secalciferol to 1-alpha,24,25-trihydroxyvitamin D3, an active ligand of VDR. Also active on 25-hydroxyvitamin D2. Mechanistically, uses molecular oxygen inserting one oxygen atom into a substrate, and reducing the second into a water molecule, with two electrons provided by NADPH via FDXR/adrenodoxin reductase and FDX1/adrenodoxin. The polypeptide is 25-hydroxyvitamin D-1 alpha hydroxylase, mitochondrial (Cyp27b1) (Mus musculus (Mouse)).